We begin with the raw amino-acid sequence, 332 residues long: Anthranilate phosphoribosyltransferase (332 aa).

Residues G80, 83–84 (GD), T88, 90–93 (NLST), 108–116 (KHGNRSASG), and S120 each bind 5-phospho-alpha-D-ribose 1-diphosphate. Anthranilate is bound at residue G80. S92 provides a ligand contact to Mg(2+). N111 provides a ligand contact to anthranilate. Anthranilate is bound at residue R166. D224 and E225 together coordinate Mg(2+).

This sequence belongs to the anthranilate phosphoribosyltransferase family. In terms of assembly, homodimer. The cofactor is Mg(2+).

It catalyses the reaction N-(5-phospho-beta-D-ribosyl)anthranilate + diphosphate = 5-phospho-alpha-D-ribose 1-diphosphate + anthranilate. The protein operates within amino-acid biosynthesis; L-tryptophan biosynthesis; L-tryptophan from chorismate: step 2/5. Catalyzes the transfer of the phosphoribosyl group of 5-phosphorylribose-1-pyrophosphate (PRPP) to anthranilate to yield N-(5'-phosphoribosyl)-anthranilate (PRA). The polypeptide is Anthranilate phosphoribosyltransferase (Pyrobaculum calidifontis (strain DSM 21063 / JCM 11548 / VA1)).